Reading from the N-terminus, the 342-residue chain is Holliday junction branch migration complex subunit RuvB (342 aa).

The interval 1 to 179 (MTSILSPEKS…FGIPMRLNFY (179 aa)) is large ATPase domain (RuvB-L). Residues Leu-18, Arg-19, Gly-60, Lys-63, Thr-64, Thr-65, 126–128 (EDF), Arg-169, Tyr-179, and Arg-216 contribute to the ATP site. Thr-64 is a Mg(2+) binding site. Positions 180-250 (NTEELKKVLN…IANFGLNRLE (71 aa)) are small ATPAse domain (RuvB-S). Positions 253–342 (IIGLDSNDYR…HQFNIFNDNE (90 aa)) are head domain (RuvB-H). Residues Arg-289, Arg-308, and Arg-313 each coordinate DNA.

It belongs to the RuvB family. Homohexamer. Forms an RuvA(8)-RuvB(12)-Holliday junction (HJ) complex. HJ DNA is sandwiched between 2 RuvA tetramers; dsDNA enters through RuvA and exits via RuvB. An RuvB hexamer assembles on each DNA strand where it exits the tetramer. Each RuvB hexamer is contacted by two RuvA subunits (via domain III) on 2 adjacent RuvB subunits; this complex drives branch migration. In the full resolvosome a probable DNA-RuvA(4)-RuvB(12)-RuvC(2) complex forms which resolves the HJ.

It localises to the cytoplasm. The catalysed reaction is ATP + H2O = ADP + phosphate + H(+). Functionally, the RuvA-RuvB-RuvC complex processes Holliday junction (HJ) DNA during genetic recombination and DNA repair, while the RuvA-RuvB complex plays an important role in the rescue of blocked DNA replication forks via replication fork reversal (RFR). RuvA specifically binds to HJ cruciform DNA, conferring on it an open structure. The RuvB hexamer acts as an ATP-dependent pump, pulling dsDNA into and through the RuvAB complex. RuvB forms 2 homohexamers on either side of HJ DNA bound by 1 or 2 RuvA tetramers; 4 subunits per hexamer contact DNA at a time. Coordinated motions by a converter formed by DNA-disengaged RuvB subunits stimulates ATP hydrolysis and nucleotide exchange. Immobilization of the converter enables RuvB to convert the ATP-contained energy into a lever motion, pulling 2 nucleotides of DNA out of the RuvA tetramer per ATP hydrolyzed, thus driving DNA branch migration. The RuvB motors rotate together with the DNA substrate, which together with the progressing nucleotide cycle form the mechanistic basis for DNA recombination by continuous HJ branch migration. Branch migration allows RuvC to scan DNA until it finds its consensus sequence, where it cleaves and resolves cruciform DNA. This Rickettsia bellii (strain RML369-C) protein is Holliday junction branch migration complex subunit RuvB.